The chain runs to 159 residues: MADDNNNGATNPTLSILAQYTKDLSFENPGAPRSLQARDKAPTININVNVNANPLSDTDFDVVLSLNAEAKDDDKTVFHTELVYGGVFRVAGFPQEHMLPVLFIECPRMLFPFARQIIADVTRNGGFPPLMIDPIDFTQMFAQRVAEEQARAKVQAVPN.

The protein belongs to the SecB family. As to quaternary structure, homotetramer, a dimer of dimers. One homotetramer interacts with 1 SecA dimer.

It localises to the cytoplasm. One of the proteins required for the normal export of preproteins out of the cell cytoplasm. It is a molecular chaperone that binds to a subset of precursor proteins, maintaining them in a translocation-competent state. It also specifically binds to its receptor SecA. The chain is Protein-export protein SecB from Rhizobium etli (strain CIAT 652).